The chain runs to 993 residues: Receptor-type tyrosine-protein kinase FLT3 (993 aa).

A signal peptide spans 1–26 (MPALARDGGQLPLLVVFSAMIFGTIT). Residues 27–543 (NQDLPVIKCV…PFPFIQDNIS (517 aa)) lie on the Extracellular side of the membrane. Cysteine 35 and cysteine 65 form a disulfide bridge. Asparagine 43 and asparagine 100 each carry an N-linked (GlcNAc...) asparagine glycan. An intrachain disulfide couples cysteine 103 to cysteine 114. Asparagine 151 carries N-linked (GlcNAc...) asparagine glycosylation. Cystine bridges form between cysteine 199–cysteine 206, cysteine 232–cysteine 241, and cysteine 272–cysteine 330. The Ig-like C2-type domain occupies 253–343 (PQTTLPQLFL…KHPSQSALVT (91 aa)). N-linked (GlcNAc...) asparagine glycans are attached at residues asparagine 306, asparagine 323, asparagine 351, and asparagine 354. 2 cysteine pairs are disulfide-bonded: cysteine 368-cysteine 407 and cysteine 381-cysteine 392. 3 N-linked (GlcNAc...) asparagine glycosylation sites follow: asparagine 473, asparagine 502, and asparagine 541. A helical transmembrane segment spans residues 544–563 (FYATIGVCLLFIVVLTLLIC). The Cytoplasmic portion of the chain corresponds to 564–993 (HKYKKQFRYE…LSPQAQVEDS (430 aa)). Tyrosine 572 bears the Phosphotyrosine mark. Residue serine 574 is modified to Phosphoserine. Phosphotyrosine; by autocatalysis is present on residues tyrosine 589, tyrosine 591, and tyrosine 599. Residues 591-597 (YVDFREY) are important for normal regulation of the kinase activity and for maintaining the kinase in an inactive state in the absence of bound ligand. The 334-residue stretch at 610–943 (LEFGKVLGSG…PSFPNLTSFL (334 aa)) folds into the Protein kinase domain. ATP-binding positions include 616–624 (LGSGAFGKV) and lysine 644. At tyrosine 726 the chain carries Phosphotyrosine; by autocatalysis. Serine 759 is modified (phosphoserine). Tyrosine 768 and tyrosine 793 each carry phosphotyrosine. Aspartate 811 (proton acceptor) is an active-site residue. Residues tyrosine 842, tyrosine 955, and tyrosine 969 each carry the phosphotyrosine; by autocatalysis modification. Position 993 is a phosphoserine (serine 993).

This sequence belongs to the protein kinase superfamily. Tyr protein kinase family. CSF-1/PDGF receptor subfamily. Monomer in the absence of bound FLT3LG. Homodimer in the presence of bound FLT3LG. Interacts with FIZ1 following ligand activation. Interacts with FES, FER, LYN, FGR, HCK, SRC and GRB2. Interacts with PTPRJ/DEP-1 and PTPN11/SHP2. Interacts with RNF115 and RNF126. In terms of assembly, (Microbial infection) Interacts with human cytomegalovirus protein UL7. In terms of processing, N-glycosylated, contains complex N-glycans with sialic acid. Post-translationally, autophosphorylated on several tyrosine residues in response to FLT3LG binding. FLT3LG binding also increases phosphorylation of mutant kinases that are constitutively activated. Dephosphorylated by PTPRJ/DEP-1, PTPN1, PTPN6/SHP-1, and to a lesser degree by PTPN12. Dephosphorylation is important for export from the endoplasmic reticulum and location at the cell membrane. Rapidly ubiquitinated by UBE2L6 and the E3 ubiquitin-protein ligase SIAH1 after autophosphorylation, leading to its proteasomal degradation. As to expression, detected in bone marrow, in hematopoietic stem cells, in myeloid progenitor cells and in granulocyte/macrophage progenitor cells (at protein level). Detected in bone marrow, liver, thymus, spleen and lymph node, and at low levels in kidney and pancreas. Highly expressed in T-cell leukemia.

The protein resides in the membrane. It localises to the endoplasmic reticulum lumen. The catalysed reaction is L-tyrosyl-[protein] + ATP = O-phospho-L-tyrosyl-[protein] + ADP + H(+). Its activity is regulated as follows. Present in an inactive conformation in the absence of bound ligand. FLT3LG binding leads to dimerization and activation by autophosphorylation. Functionally, tyrosine-protein kinase that acts as a cell-surface receptor for the cytokine FLT3LG and regulates differentiation, proliferation and survival of hematopoietic progenitor cells and of dendritic cells. Promotes phosphorylation of SHC1 and AKT1, and activation of the downstream effector MTOR. Promotes activation of RAS signaling and phosphorylation of downstream kinases, including MAPK1/ERK2 and/or MAPK3/ERK1. Promotes phosphorylation of FES, FER, PTPN6/SHP, PTPN11/SHP-2, PLCG1, and STAT5A and/or STAT5B. Activation of wild-type FLT3 causes only marginal activation of STAT5A or STAT5B. Mutations that cause constitutive kinase activity promote cell proliferation and resistance to apoptosis via the activation of multiple signaling pathways. This chain is Receptor-type tyrosine-protein kinase FLT3 (FLT3), found in Homo sapiens (Human).